The sequence spans 311 residues: Methionyl-tRNA formyltransferase (311 aa).

110 to 113 contributes to the (6S)-5,6,7,8-tetrahydrofolate binding site; sequence SLLP.

This sequence belongs to the Fmt family.

The catalysed reaction is L-methionyl-tRNA(fMet) + (6R)-10-formyltetrahydrofolate = N-formyl-L-methionyl-tRNA(fMet) + (6S)-5,6,7,8-tetrahydrofolate + H(+). Attaches a formyl group to the free amino group of methionyl-tRNA(fMet). The formyl group appears to play a dual role in the initiator identity of N-formylmethionyl-tRNA by promoting its recognition by IF2 and preventing the misappropriation of this tRNA by the elongation apparatus. This Streptococcus pyogenes serotype M2 (strain MGAS10270) protein is Methionyl-tRNA formyltransferase.